A 172-amino-acid chain; its full sequence is Protein PLASTID REDOX INSENSITIVE 2, chloroplastic (172 aa).

The transit peptide at 1–54 (MAARLWAAAVAPATLNPPLLTLSASSSPSSSRLRRSVLGRLRSRAPRPADFVCR) directs the protein to the chloroplast.

The protein resides in the plastid. It localises to the chloroplast stroma. It is found in the chloroplast nucleoid. Functionally, required for the activity of the plastid-encoded RNA polymerase (PEP) and full expression of genes transcribed by PEP. This chain is Protein PLASTID REDOX INSENSITIVE 2, chloroplastic, found in Oryza sativa subsp. japonica (Rice).